A 349-amino-acid polypeptide reads, in one-letter code: Small ribosomal subunit biogenesis GTPase RsgA (349 aa).

Residues 1–38 (MSKNKLSKGQERRVQANHQRRLKRTDNKPELDDSQLGE) form a disordered region. The CP-type G domain maps to 102–272 (TSVLNRPDIY…VIDSPGVREF (171 aa)). GTP-binding positions include 158–161 (NKID) and 212–220 (GQSGVGKSS). Residues C296, C301, H303, and C309 each coordinate Zn(2+).

It belongs to the TRAFAC class YlqF/YawG GTPase family. RsgA subfamily. Monomer. Associates with 30S ribosomal subunit, binds 16S rRNA. The cofactor is Zn(2+).

Its subcellular location is the cytoplasm. In terms of biological role, one of several proteins that assist in the late maturation steps of the functional core of the 30S ribosomal subunit. Helps release RbfA from mature subunits. May play a role in the assembly of ribosomal proteins into the subunit. Circularly permuted GTPase that catalyzes slow GTP hydrolysis, GTPase activity is stimulated by the 30S ribosomal subunit. The protein is Small ribosomal subunit biogenesis GTPase RsgA of Serratia proteamaculans (strain 568).